Here is a 163-residue protein sequence, read N- to C-terminus: NADH-quinone oxidoreductase subunit I (163 aa).

2 consecutive 4Fe-4S ferredoxin-type domains span residues 54–84 and 94–123; these read LRRYPNGEERCIACKLCEAVCPALAITIESD and TRYDIDLTKCIFCGFCEEACPVDAIVETHI. [4Fe-4S] cluster contacts are provided by C64, C67, C70, C74, C103, C106, C109, and C113.

The protein belongs to the complex I 23 kDa subunit family. As to quaternary structure, NDH-1 is composed of 14 different subunits. Subunits NuoA, H, J, K, L, M, N constitute the membrane sector of the complex. The cofactor is [4Fe-4S] cluster.

It is found in the cell inner membrane. The enzyme catalyses a quinone + NADH + 5 H(+)(in) = a quinol + NAD(+) + 4 H(+)(out). NDH-1 shuttles electrons from NADH, via FMN and iron-sulfur (Fe-S) centers, to quinones in the respiratory chain. The immediate electron acceptor for the enzyme in this species is believed to be ubiquinone. Couples the redox reaction to proton translocation (for every two electrons transferred, four hydrogen ions are translocated across the cytoplasmic membrane), and thus conserves the redox energy in a proton gradient. This chain is NADH-quinone oxidoreductase subunit I, found in Ralstonia nicotianae (strain ATCC BAA-1114 / GMI1000) (Ralstonia solanacearum).